The following is a 268-amino-acid chain: Microtubule-associated protein RP/EB family member 1 (268 aa).

A2 is subject to N-acetylalanine. Residues 14–116 enclose the Calponin-homology (CH) domain; it reads NLSRHDMLAW…FVQWFKKFFD (103 aa). K66 carries the N6-crotonyllysine modification. A Phosphotyrosine modification is found at Y124. Residues 124–268 are interaction with MTUS2/TIP150; it reads YDPVAARQGQ…GGPQEEQEEY (145 aa). Residues 147–160 are compositionally biased toward low complexity; it reads NKPKKPLSSSSAAP. Positions 147–184 are disordered; it reads NKPKKPLSSSSAAPQRPITTHRTTATPKAGPGVVRKNP. Residue S155 is modified to Phosphoserine. The segment covering 163–172 has biased composition (polar residues); the sequence is PITTHRTTAT. The 71-residue stretch at 185-255 folds into the EB1 C-terminal domain; the sequence is GVGNGDDEAA…LYATDEGFVI (71 aa). The interval 185 to 268 is interaction with CDK5RAP2; that stretch reads GVGNGDDEAA…GGPQEEQEEY (84 aa). The segment at 206–211 is interaction with APC; that stretch reads TVEDLE. The interval 208-268 is DCTN1-binding; that stretch reads EDLEKERDFY…GGPQEEQEEY (61 aa). At K220 the chain carries N6-acetyllysine. The APC-binding stretch occupies residues 220 to 242; the sequence is KLRNIELICQENEGENNPVLQRI. The interval 232–255 is interaction with SKA1; it reads EGENNPVLQRIVDILYATDEGFVI.

Belongs to the MAPRE family. Homodimer. Heterodimer with MAPRE3. Interacts with DCTN1, DCTN2, TERF1 and dynein intermediate chain. Interaction with DIAPH1 and DIAPH2. Interacts (via C-terminal residues 206-211) with APC (via C-terminal residues 2674-2845); the interaction inhibits association with and bundling of F-actin. Interacts with CLASP2, DST, KIF2C and STIM1; probably required for their targeting to the growing microtubule plus ends. Interacts with MTUS2; interaction is direct and probably targets MTUS2 to microtubules. Interacts (via C-terminus) with SKA1 (via SXIP motif); the interaction is direct and stabilizes the kinetochore-microtubule attachment of the SKA1 complex. Interacts with APC2. Interacts with CLASP1. Interacts with CDK5RAP2. Interacts with MACF1. Interacts with RABL2/RABL2A; binds preferentially to GTP-bound RABL2. Interacts with KCNAB2. Interacts (via C-terminus) with CLIP1. Interacts with SLAIN2 and SLAIN1. Interacts with KIF18B; this interaction is required for efficient accumulation of KIF18B at microtubule plus ends. Interacts with MISP. Interacts with KNSTRN. Interacts with NCKAP5L. Interacts with CAMSAP2. Interacts with PDE4DIP isoform 13/MMG8/SMYLE; this interaction is required for its recruitment to the Golgi apparatus. Forms a pericentrosomal complex with AKAP9, CDK5RAP2 and PDE4DIP isoform 13/MMG8/SMYLE; within this complex, MAPRE1 binding to CDK5RAP2 may be mediated by PDE4DIP. Interacts with AKNA. Interacts with GAS2L1, GAS2L2, and GAS2L3. Acetylation at Lys-220 by KAT2B/PCAF promotes dynamic kinetochore-microtubule interactions in early mitosis. Post-translationally, crotonylated by KAT5 during mitosis, promoting astral microtubule plasticity and dynamic connection between astral microtubules and the cortex during mitotic chromosome segregation, thereby ensuring accurate spindle positioning in mitosis. Decrotonylated by HDAC3.

Its subcellular location is the cytoplasm. It localises to the cytoskeleton. The protein resides in the microtubule organizing center. The protein localises to the centrosome. It is found in the golgi apparatus. Its subcellular location is the spindle. It localises to the spindle pole. Functionally, plus-end tracking protein (+TIP) that binds to the plus-end of microtubules and regulates the dynamics of the microtubule cytoskeleton. Recruits other +TIP proteins to microtubules by binding to a conserved Ser-X-Leu-Pro (SXLP) motif in their polypeptide chains. Promotes cytoplasmic microtubule nucleation and elongation. Involved in mitotic spindle positioning by stabilizing microtubules and promoting dynamic connection between astral microtubules and the cortex during mitotic chromosome segregation. Assists chromosome alignment in metaphase by recruiting the SKA complex to the spindle and stabilizing its interactions with microtubule bundles (K-fibers). Also acts as a regulator of minus-end microtubule organization: interacts with the complex formed by AKAP9 and PDE4DIP, leading to recruit CAMSAP2 to the Golgi apparatus, thereby tethering non-centrosomal minus-end microtubules to the Golgi, an important step for polarized cell movement. Promotes elongation of CAMSAP2-decorated microtubule stretches on the minus-end of microtubules. Acts as a regulator of autophagosome transport via interaction with CAMSAP2. Functions downstream of Rho GTPases and DIAPH1 in stable microtubule formation. May play a role in cell migration. In Bos taurus (Bovine), this protein is Microtubule-associated protein RP/EB family member 1 (MAPRE1).